The following is a 145-amino-acid chain: Protein SprT-like (145 aa).

The SprT-like domain occupies 4 to 140 (TNYVQEVSLA…VCGNCHGKLM (137 aa)). Histidine 64 contacts Zn(2+). Glutamate 65 is a catalytic residue. Histidine 68 contributes to the Zn(2+) binding site.

The protein belongs to the SprT family. The cofactor is Zn(2+).

Its subcellular location is the cytoplasm. The protein is Protein SprT-like of Streptococcus pyogenes serotype M3 (strain SSI-1).